The primary structure comprises 545 residues: CTP synthase (545 aa).

The segment at 1–266 is amidoligase domain; the sequence is MTTNYIFVTG…DDYICKRFSL (266 aa). Ser-14 is a CTP binding site. UTP is bound at residue Ser-14. Residues 15–20 and Asp-72 each bind ATP; that span reads SLGKGI. Positions 72 and 140 each coordinate Mg(2+). CTP contacts are provided by residues 147–149, 187–192, and Lys-223; these read DIE and KTKPTQ. UTP contacts are provided by residues 187–192 and Lys-223; that span reads KTKPTQ. Position 239–241 (239–241) interacts with ATP; it reads KDV. Positions 291–542 constitute a Glutamine amidotransferase type-1 domain; sequence TIGMVGKYIE…VKAASEYQKR (252 aa). Gly-352 serves as a coordination point for L-glutamine. Cys-379 (nucleophile; for glutamine hydrolysis) is an active-site residue. L-glutamine is bound by residues 380–383, Glu-403, and Arg-470; that span reads LGMQ. Active-site residues include His-515 and Glu-517.

Belongs to the CTP synthase family. In terms of assembly, homotetramer.

It catalyses the reaction UTP + L-glutamine + ATP + H2O = CTP + L-glutamate + ADP + phosphate + 2 H(+). The enzyme catalyses L-glutamine + H2O = L-glutamate + NH4(+). It carries out the reaction UTP + NH4(+) + ATP = CTP + ADP + phosphate + 2 H(+). It participates in pyrimidine metabolism; CTP biosynthesis via de novo pathway; CTP from UDP: step 2/2. Its activity is regulated as follows. Allosterically activated by GTP, when glutamine is the substrate; GTP has no effect on the reaction when ammonia is the substrate. The allosteric effector GTP functions by stabilizing the protein conformation that binds the tetrahedral intermediate(s) formed during glutamine hydrolysis. Inhibited by the product CTP, via allosteric rather than competitive inhibition. Its function is as follows. Catalyzes the ATP-dependent amination of UTP to CTP with either L-glutamine or ammonia as the source of nitrogen. Regulates intracellular CTP levels through interactions with the four ribonucleotide triphosphates. This is CTP synthase from Klebsiella pneumoniae subsp. pneumoniae (strain ATCC 700721 / MGH 78578).